Consider the following 282-residue polypeptide: Nucleotide-binding protein Fnod_1159 (282 aa).

9-16 (GHSGAGKS) contributes to the ATP binding site. 57–60 (DIRS) is a GTP binding site.

This sequence belongs to the RapZ-like family.

Displays ATPase and GTPase activities. This chain is Nucleotide-binding protein Fnod_1159, found in Fervidobacterium nodosum (strain ATCC 35602 / DSM 5306 / Rt17-B1).